A 434-amino-acid polypeptide reads, in one-letter code: Tyrosine-protein phosphatase non-receptor type 1 (434 aa).

Positions I3 to G277 constitute a Tyrosine-protein phosphatase domain. At S50 the chain carries Phosphoserine. Residues D181, C215–R221, and Q262 each bind substrate. C215 (phosphocysteine intermediate) is an active-site residue. A disordered region spans residues W291 to M319.

Belongs to the protein-tyrosine phosphatase family. Non-receptor class 1 subfamily. As to quaternary structure, interacts with EPHA3 (phosphorylated); dephosphorylates EPHA3 and may regulate its trafficking and function. Interacts with MET. Interacts with NCK1. Post-translationally, phosphorylated on serine and threonine residues near the N-terminus by casein kinase II (CK2).

It is found in the endoplasmic reticulum membrane. The catalysed reaction is O-phospho-L-tyrosyl-[protein] + H2O = L-tyrosyl-[protein] + phosphate. May play an important role in CKII- and p60c-src-induced signal transduction cascades. May regulate the EFNA5-EPHA3 signaling pathway which modulates cell reorganization and cell-cell repulsion. May also regulate the hepatocyte growth factor receptor signaling pathway through dephosphorylation of MET. The sequence is that of Tyrosine-protein phosphatase non-receptor type 1 (PTPN1) from Gallus gallus (Chicken).